The primary structure comprises 128 residues: Large ribosomal subunit protein bL12 (128 aa).

Homodimer. Part of the 50S ribosomal subunit; present in 6 copies per ribosome. Forms part of the ribosomal stalk which helps the ribosome interact with GTP-bound translation factors. Forms a heptameric L10(L12)2(L12)2(L12)2 complex, where L10 forms an elongated spine to which 3 L12 dimers bind in a sequential fashion.

Functionally, forms part of the ribosomal stalk which helps the ribosome interact with GTP-bound translation factors. Is thus essential for accurate translation. The sequence is that of Large ribosomal subunit protein bL12 from Thermotoga maritima (strain ATCC 43589 / DSM 3109 / JCM 10099 / NBRC 100826 / MSB8).